We begin with the raw amino-acid sequence, 261 residues long: MWDPDVYLAFSGHRNRPFYELVSRVGLERARRVVDLGCGPGHLTRYLARRWPGAVIEALDSSPEMVAAAAERGIDATTGDLRDWKPKPDTDVVVSNAALHWVPEHSDLLVRWVDELAPGSWIAVQIPGNFETPSHAAVRALARREPYAKLMRDIPFRVGAVVQSPAYYAELLMDTGCKVDVWETTYLHQLTGEHPVLDWITGSALVPVRERLSDESWQQFRQELIPLLNDAYPPRADGSTIFPFRRLFMVAEVGGARRSGG.

This sequence belongs to the methyltransferase superfamily. Tam family.

The protein resides in the cytoplasm. It catalyses the reaction trans-aconitate + S-adenosyl-L-methionine = (E)-3-(methoxycarbonyl)pent-2-enedioate + S-adenosyl-L-homocysteine. Its function is as follows. Catalyzes the S-adenosylmethionine monomethyl esterification of trans-aconitate. The chain is Probable trans-aconitate 2-methyltransferase from Mycobacterium bovis (strain ATCC BAA-935 / AF2122/97).